The following is a 506-amino-acid chain: Carboxyl-terminal PDZ ligand of neuronal nitric oxide synthase protein (506 aa).

Residues 26–196 (FQHGICFEAK…ESERNSNSSG (171 aa)) form the PID domain. 2 disordered regions span residues 175–224 (HTQQ…VEVP) and 241–260 (DAVG…HPQE). Residues serine 188, serine 192, and serine 195 each carry the phosphoserine modification. Over residues 203 to 213 (TGAERASTATA) the composition is skewed to low complexity. Serine 266 is subject to Phosphoserine. Positions 322–363 (AAEAAARLEAQARVHQLLLQNKDMLQHISLLVKQVQELELKL) form a coiled coil. Phosphoserine is present on residues serine 371, serine 374, serine 401, and serine 417. The interval 494–506 (QELGDGLDDEIAV) is interaction with NOS1. Positions 504–506 (IAV) match the PDZ-binding motif.

Interacts with the PDZ domain of NOS1 or the second PDZ domain of DLG4 through its C-terminus. Interacts with RASD1 and SYN1, SYN2 and SYN3 via its PID domain. Forms a ternary complex with NOS1 and RASD1. Forms a ternary complex with NOS1 and SYN1. Expressed in kidney glomeruli podocytes.

It is found in the cell projection. The protein resides in the filopodium. The protein localises to the podosome. In terms of biological role, adapter protein involved in neuronal nitric-oxide (NO) synthesis regulation via its association with nNOS/NOS1. The complex formed with NOS1 and synapsins is necessary for specific NO and synapsin functions at a presynaptic level. Mediates an indirect interaction between NOS1 and RASD1 leading to enhance the ability of NOS1 to activate RASD1. Competes with DLG4 for interaction with NOS1, possibly affecting NOS1 activity by regulating the interaction between NOS1 and DLG4. In kidney podocytes, plays a role in podosomes and filopodia formation through CDC42 activation. This is Carboxyl-terminal PDZ ligand of neuronal nitric oxide synthase protein from Homo sapiens (Human).